The chain runs to 220 residues: Iron-sulfur cluster repair protein YtfE (220 aa).

It belongs to the RIC family. YtfE subfamily. As to quaternary structure, homodimer.

The protein resides in the cytoplasm. Di-iron-containing protein involved in the repair of iron-sulfur clusters damaged by oxidative and nitrosative stress conditions. The chain is Iron-sulfur cluster repair protein YtfE from Escherichia coli O81 (strain ED1a).